An 836-amino-acid polypeptide reads, in one-letter code: Taste receptor type 1 member 2 (836 aa).

Positions 1 to 19 are cleaved as a signal peptide; that stretch reads MGPRAKAVCSLFILLQVLA. The Extracellular portion of the chain corresponds to 20–565; that stretch reads EPAENSDFYL…AFLEWHEPST (546 aa). Residues Asn84, Asn292, Asn312, Asn351, Asn427, Asn479, Asn486, Asn526, and Asn546 are each glycosylated (N-linked (GlcNAc...) asparagine). Residues 566 to 586 traverse the membrane as a helical segment; the sequence is IFVVMLTILGFLSTLAIMVIF. The Cytoplasmic segment spans residues 587 to 601; it reads WRHLHTPVVRSAGGP. Residues 602–622 form a helical membrane-spanning segment; sequence MCFLMLVPLLLAYAMVPMYIG. Over 623-634 the chain is Extracellular; sequence QPTFFSCLWRQT. The chain crosses the membrane as a helical span at residues 635 to 655; sequence FFTLCFTICISCITVRSFQIV. Residues 656–680 lie on the Cytoplasmic side of the membrane; sequence CIFKMARRLPRAYGYWVRCHGPYVF. The helical transmembrane segment at 681–701 threads the bilayer; sequence VASFMVLKVVIVAGNVLATTA. Residues 702-724 lie on the Extracellular side of the membrane; the sequence is NPTARPDPDDPNIMVLSCNYRRA. Residues 725–745 traverse the membrane as a helical segment; the sequence is LLFNTSLDLLLSVAGFSFAYM. The Cytoplasmic segment spans residues 746 to 757; it reads GKELPTNYNEAK. Residues 758–778 traverse the membrane as a helical segment; the sequence is FITLCMTFYFTSSVSLCTFMS. Over 779–781 the chain is Extracellular; the sequence is VYD. The helical transmembrane segment at 782–802 threads the bilayer; it reads GVLVTILDLLITVLNLLGISF. Residues 803-836 are Cytoplasmic-facing; the sequence is GYFGPKCYMVLFYPERNTQVYFSSMIQGYTMGKD.

This sequence belongs to the G-protein coupled receptor 3 family. TAS1R subfamily. As to quaternary structure, forms heterodimers with TAS1R3.

The protein resides in the cell membrane. In terms of biological role, putative taste receptor. TAS1R2/TAS1R3 recognizes diverse natural and synthetic sweeteners. This is Taste receptor type 1 member 2 (TAS1R2) from Canis lupus familiaris (Dog).